A 395-amino-acid polypeptide reads, in one-letter code: Protein phosphatase methylesterase 1 (395 aa).

Catalysis depends on residues Ser194, Asp222, and His348.

Belongs to the AB hydrolase superfamily.

The enzyme catalyses [phosphatase 2A protein]-C-terminal L-leucine methyl ester + H2O = [phosphatase 2A protein]-C-terminal L-leucine + methanol + H(+). Functionally, demethylates proteins that have been reversibly carboxymethylated. Demethylates the phosphatase PP2A catalytic subunit. This Kluyveromyces lactis (strain ATCC 8585 / CBS 2359 / DSM 70799 / NBRC 1267 / NRRL Y-1140 / WM37) (Yeast) protein is Protein phosphatase methylesterase 1 (PPE1).